The following is a 574-amino-acid chain: Arginine--tRNA ligase (574 aa).

The 'HIGH' region signature appears at 126-136 (PNIAKRMHVGH).

Belongs to the class-I aminoacyl-tRNA synthetase family. Monomer.

Its subcellular location is the cytoplasm. It carries out the reaction tRNA(Arg) + L-arginine + ATP = L-arginyl-tRNA(Arg) + AMP + diphosphate. This is Arginine--tRNA ligase from Chloroflexus aggregans (strain MD-66 / DSM 9485).